A 469-amino-acid chain; its full sequence is GTPase Der (469 aa).

EngA-type G domains lie at 3-166 (PVIA…PEDE) and 177-350 (LRLA…ESAN). Residues 9–16 (GRPNVGKS), 56–60 (DTGGI), 118–121 (NKVD), 183–190 (GRPNVGKS), 230–234 (DTAGV), and 295–298 (NKWD) contribute to the GTP site. Residues 351–435 (LKVSPAKLTQ…PVKIEFKTSE (85 aa)) enclose the KH-like domain.

The protein belongs to the TRAFAC class TrmE-Era-EngA-EngB-Septin-like GTPase superfamily. EngA (Der) GTPase family. As to quaternary structure, associates with the 50S ribosomal subunit.

Functionally, GTPase that plays an essential role in the late steps of ribosome biogenesis. The chain is GTPase Der from Acinetobacter baumannii (strain SDF).